A 73-amino-acid chain; its full sequence is Large ribosomal subunit protein uL30 (73 aa).

Belongs to the universal ribosomal protein uL30 family. Part of the 50S ribosomal subunit.

The polypeptide is Large ribosomal subunit protein uL30 (Borrelia hermsii (strain HS1 / DAH)).